Reading from the N-terminus, the 603-residue chain is Glutamyl-tRNA(Gln) amidotransferase subunit B, mitochondrial (603 aa).

2 disordered regions span residues 38 to 61 (RGRDWSSTSRRAIDTQTSGASNGA) and 72 to 91 (EQAREGRAATRKGEVSPPEH). Positions 42-58 (WSSTSRRAIDTQTSGAS) are enriched in polar residues.

The protein belongs to the GatB/GatE family. GatB subfamily. Subunit of the heterotrimeric GatCAB amidotransferase (AdT) complex, composed of A, B and C subunits.

The protein resides in the mitochondrion. The catalysed reaction is L-glutamyl-tRNA(Gln) + L-glutamine + ATP + H2O = L-glutaminyl-tRNA(Gln) + L-glutamate + ADP + phosphate + H(+). Functionally, allows the formation of correctly charged Gln-tRNA(Gln) through the transamidation of misacylated Glu-tRNA(Gln) in the mitochondria. The reaction takes place in the presence of glutamine and ATP through an activated gamma-phospho-Glu-tRNA(Gln). The sequence is that of Glutamyl-tRNA(Gln) amidotransferase subunit B, mitochondrial from Paracoccidioides brasiliensis (strain Pb18).